We begin with the raw amino-acid sequence, 344 residues long: tRNA N6-adenosine threonylcarbamoyltransferase (344 aa).

2 residues coordinate Fe cation: His119 and His123. Substrate is bound by residues 141–145, Asp174, Gly187, Asp191, and Asn280; that span reads VVSGG. Asp310 contacts Fe cation.

Belongs to the KAE1 / TsaD family. The cofactor is Fe(2+).

Its subcellular location is the cytoplasm. The catalysed reaction is L-threonylcarbamoyladenylate + adenosine(37) in tRNA = N(6)-L-threonylcarbamoyladenosine(37) in tRNA + AMP + H(+). Required for the formation of a threonylcarbamoyl group on adenosine at position 37 (t(6)A37) in tRNAs that read codons beginning with adenine. Is involved in the transfer of the threonylcarbamoyl moiety of threonylcarbamoyl-AMP (TC-AMP) to the N6 group of A37, together with TsaE and TsaB. TsaD likely plays a direct catalytic role in this reaction. The polypeptide is tRNA N6-adenosine threonylcarbamoyltransferase (Listeria innocua serovar 6a (strain ATCC BAA-680 / CLIP 11262)).